The chain runs to 264 residues: MDLIHVVVLALIQGITEFLPISSSAHLILPKEILGWPDQGLAFDVAVHVGTLTAVAVYFRNDIGKIIIGWLSSVTGRGTDESGRLGWYLIAATIPAALFGLIFDDLIETHLRSTDVIATTTLVFGVLLWVADRKPAETKQLRDIALSTAMIIGLAQAVALIPGTSRSGITITAALFLGLCRTDAARFSFLLSIPVIVLSGGYKGLQLVLSAAAVDWLAIGLGIALSAVSAYICIHYFLNFINRIGMLPFVIYRLLLGVLLFIAV.

8 helical membrane passes run 1–21 (MDLI…FLPI), 39–59 (QGLA…AVYF), 87–107 (WYLI…DDLI), 111–131 (LRST…LWVA), 144–164 (IALS…IPGT), 187–207 (FSFL…GLQL), 208–228 (VLSA…LSAV), and 244–264 (IGML…FIAV).

Belongs to the UppP family.

The protein resides in the cell inner membrane. It catalyses the reaction di-trans,octa-cis-undecaprenyl diphosphate + H2O = di-trans,octa-cis-undecaprenyl phosphate + phosphate + H(+). Catalyzes the dephosphorylation of undecaprenyl diphosphate (UPP). Confers resistance to bacitracin. The chain is Undecaprenyl-diphosphatase from Teredinibacter turnerae (strain ATCC 39867 / T7901).